Reading from the N-terminus, the 504-residue chain is Apolipoprotein N-acyltransferase (504 aa).

Transmembrane regions (helical) follow at residues 6–26, 47–67, 83–103, 105–125, 153–173, and 186–206; these read LALTGGILLPFAFAPFGYALV, ALYGYLFGLGQFGIGVSWVFV, LTALFVAYLALFPALAGWLGV, AGGGSILVRTLLVFPAAWVVT, IAPVFGVFGVGWLLAVLAGLL, and FALLGAAVVLVGSTQFAKVQW. A CN hydrolase domain is found at 219–457; sequence LQGNVPQDQK…REALTGMMQP (239 aa). Glutamate 258 acts as the Proton acceptor in catalysis. Lysine 317 is an active-site residue. Cysteine 369 (nucleophile) is an active-site residue. Residues 465–485 traverse the membrane as a helical segment; the sequence is ALWGDWPAIGLCAGIVGICFA.

The protein belongs to the CN hydrolase family. Apolipoprotein N-acyltransferase subfamily.

Its subcellular location is the cell inner membrane. The catalysed reaction is N-terminal S-1,2-diacyl-sn-glyceryl-L-cysteinyl-[lipoprotein] + a glycerophospholipid = N-acyl-S-1,2-diacyl-sn-glyceryl-L-cysteinyl-[lipoprotein] + a 2-acyl-sn-glycero-3-phospholipid + H(+). It participates in protein modification; lipoprotein biosynthesis (N-acyl transfer). In terms of biological role, catalyzes the phospholipid dependent N-acylation of the N-terminal cysteine of apolipoprotein, the last step in lipoprotein maturation. In Methylococcus capsulatus (strain ATCC 33009 / NCIMB 11132 / Bath), this protein is Apolipoprotein N-acyltransferase.